The sequence spans 261 residues: tRNA U34 carboxymethyltransferase (261 aa).

Carboxy-S-adenosyl-L-methionine is bound by residues Lys25, Trp39, Lys44, Gly63, 114 to 115 (VE), Tyr135, and Arg250.

This sequence belongs to the class I-like SAM-binding methyltransferase superfamily. CmoB family. As to quaternary structure, homotetramer.

It catalyses the reaction carboxy-S-adenosyl-L-methionine + 5-hydroxyuridine(34) in tRNA = 5-carboxymethoxyuridine(34) in tRNA + S-adenosyl-L-homocysteine + H(+). Its function is as follows. Catalyzes carboxymethyl transfer from carboxy-S-adenosyl-L-methionine (Cx-SAM) to 5-hydroxyuridine (ho5U) to form 5-carboxymethoxyuridine (cmo5U) at position 34 in tRNAs. The polypeptide is tRNA U34 carboxymethyltransferase (Helicobacter pylori (strain Shi470)).